The primary structure comprises 308 residues: Transaldolase (308 aa).

Lysine 125 serves as the catalytic Schiff-base intermediate with substrate.

The protein belongs to the transaldolase family. Type 1 subfamily. In terms of assembly, homodimer.

Its subcellular location is the cytoplasm. It carries out the reaction D-sedoheptulose 7-phosphate + D-glyceraldehyde 3-phosphate = D-erythrose 4-phosphate + beta-D-fructose 6-phosphate. Its pathway is carbohydrate degradation; pentose phosphate pathway; D-glyceraldehyde 3-phosphate and beta-D-fructose 6-phosphate from D-ribose 5-phosphate and D-xylulose 5-phosphate (non-oxidative stage): step 2/3. In terms of biological role, transaldolase is important for the balance of metabolites in the pentose-phosphate pathway. This is Transaldolase from Pseudomonas entomophila (strain L48).